A 177-amino-acid chain; its full sequence is Large ribosomal subunit protein bL31m (177 aa).

The transit peptide at 1–14 (MLKSIFAKRFASTG) directs the protein to the mitochondrion. The sufficient for general mitochondrial translation stretch occupies residues 36–118 (KSRPAIYHQF…FSVDSTTPNS (83 aa)). The sufficient for dosage suppression of COX2 mutation stretch occupies residues 87–177 (LVVVDANSGG…KLASKKRDKK (91 aa)). Residues 111-123 (VDSTTPNSSSETV) show a composition bias toward polar residues. The segment at 111–144 (VDSTTPNSSSETVELSEENKKKTQIKKEEKEDVS) is disordered. The segment covering 127–144 (EENKKKTQIKKEEKEDVS) has biased composition (basic and acidic residues).

Belongs to the bacterial ribosomal protein bL31 family. Highly divergent. In terms of assembly, component of the mitochondrial large ribosomal subunit (mt-LSU). Mature yeast 74S mitochondrial ribosomes consist of a small (37S) and a large (54S) subunit. The 37S small subunit contains a 15S ribosomal RNA (15S mt-rRNA) and 34 different proteins. The 54S large subunit contains a 21S rRNA (21S mt-rRNA) and 46 different proteins.

The protein localises to the mitochondrion. Component of the mitochondrial ribosome (mitoribosome), a dedicated translation machinery responsible for the synthesis of mitochondrial genome-encoded proteins, including at least some of the essential transmembrane subunits of the mitochondrial respiratory chain. The mitoribosomes are attached to the mitochondrial inner membrane and translation products are cotranslationally integrated into the membrane. Overexpression of bL31m suppresses mutations in the COX2 leader peptide-encoding and initiation codon regions. This Saccharomyces cerevisiae (strain ATCC 204508 / S288c) (Baker's yeast) protein is Large ribosomal subunit protein bL31m (MRPL36).